We begin with the raw amino-acid sequence, 476 residues long: Bifunctional protein HldE (476 aa).

A ribokinase region spans residues 1–319; sequence MKVSLPAFEK…EALALHHGES (319 aa). Residue 195-198 participates in ATP binding; it reads NMSE. Asp-264 is a catalytic residue. Positions 345–476 are cytidylyltransferase; the sequence is MTNGCFDILH…AIIQNIMANQ (132 aa).

The protein in the N-terminal section; belongs to the carbohydrate kinase PfkB family. In the C-terminal section; belongs to the cytidylyltransferase family. As to quaternary structure, homodimer.

It catalyses the reaction D-glycero-beta-D-manno-heptose 7-phosphate + ATP = D-glycero-beta-D-manno-heptose 1,7-bisphosphate + ADP + H(+). The enzyme catalyses D-glycero-beta-D-manno-heptose 1-phosphate + ATP + H(+) = ADP-D-glycero-beta-D-manno-heptose + diphosphate. Its pathway is nucleotide-sugar biosynthesis; ADP-L-glycero-beta-D-manno-heptose biosynthesis; ADP-L-glycero-beta-D-manno-heptose from D-glycero-beta-D-manno-heptose 7-phosphate: step 1/4. It participates in nucleotide-sugar biosynthesis; ADP-L-glycero-beta-D-manno-heptose biosynthesis; ADP-L-glycero-beta-D-manno-heptose from D-glycero-beta-D-manno-heptose 7-phosphate: step 3/4. Functionally, catalyzes the phosphorylation of D-glycero-D-manno-heptose 7-phosphate at the C-1 position to selectively form D-glycero-beta-D-manno-heptose-1,7-bisphosphate. In terms of biological role, catalyzes the ADP transfer from ATP to D-glycero-beta-D-manno-heptose 1-phosphate, yielding ADP-D-glycero-beta-D-manno-heptose. In Shewanella baltica (strain OS195), this protein is Bifunctional protein HldE.